The primary structure comprises 1056 residues: PH and SEC7 domain-containing protein 4 (1056 aa).

Residues 25–42 (LEPHPGECPRETCSHEDP) are compositionally biased toward basic and acidic residues. Disordered stretches follow at residues 25 to 71 (LEPH…SGVE), 87 to 149 (CQEQ…QNRS), 195 to 239 (LPGD…QWGA), 340 to 362 (GAPA…APSA), 388 to 533 (VQPW…GDVQ), and 546 to 581 (LRTP…LANG). 2 stretches are compositionally biased toward polar residues: residues 88-99 (QEQTRATDPPES) and 128-137 (NTASPGSPVN). Phosphoserine occurs at positions 131, 134, and 143. The span at 207–220 (ENEDSGEDSSEPEG) shows a compositional bias: acidic residues. Ser413 is modified (phosphoserine). Positions 414-423 (QDRDEREGGH) are enriched in basic and acidic residues. Over residues 438 to 456 (RSPASSPEPSSPESESRGP) the composition is skewed to low complexity. A phosphoserine mark is found at Ser448, Ser469, and Ser491. Composition is skewed to polar residues over residues 466 to 476 (QEGSPQLQHHS) and 486 to 502 (DASQ…QPSS). The span at 504-522 (KKKEAGEAPKPGEEVKSEG) shows a compositional bias: basic and acidic residues. The region spanning 544-736 (ENLRTPMNSS…KALYWSIRSE (193 aa)) is the SEC7 domain. Positions 548 to 567 (TPMNSSWLPGSPMPQAQSPE) are enriched in polar residues. The 117-residue stretch at 776–892 (PTYKQGILAR…WIARINLAAA (117 aa)) folds into the PH domain. Residues 921 to 976 (SSLEEQHRSHENCLDAAADDLLDLQRNLPERRGRGRELEEHRLRKEYLEYEKTRYE) adopt a coiled-coil conformation. The segment at 1004–1056 (AGGTREPKLSLKKSHSSPSLHQDEAPTTAKVKRNISERRTYRKIIPKRNRNQL) is disordered. Phosphoserine is present on residues Ser1019 and Ser1022. The segment covering 1043 to 1056 (TYRKIIPKRNRNQL) has biased composition (basic residues).

Widely expressed. Highest levels of expression are found in placenta, pancreas, spleen, thymus and peripheral blood.

Its subcellular location is the cell membrane. It localises to the cell projection. The protein resides in the ruffle membrane. In terms of biological role, guanine nucleotide exchange factor for ARF6 and ARL14/ARF7. Through ARL14 activation, controls the movement of MHC class II-containing vesicles along the actin cytoskeleton in dendritic cells. Involved in membrane recycling. Interacts with several phosphatidylinositol phosphate species, including phosphatidylinositol 3,4-bisphosphate, phosphatidylinositol 3,5-bisphosphate and phosphatidylinositol 4,5-bisphosphate. The sequence is that of PH and SEC7 domain-containing protein 4 (PSD4) from Homo sapiens (Human).